The chain runs to 333 residues: Nucleoid-associated protein APL_0429 (333 aa).

This sequence belongs to the YejK family.

It is found in the cytoplasm. It localises to the nucleoid. The protein is Nucleoid-associated protein APL_0429 of Actinobacillus pleuropneumoniae serotype 5b (strain L20).